The primary structure comprises 141 residues: Aspartate 1-decarboxylase (141 aa).

Ser25 (schiff-base intermediate with substrate; via pyruvic acid) is an active-site residue. Position 25 is a pyruvic acid (Ser) (Ser25). Substrate is bound at residue Thr57. Catalysis depends on Tyr58, which acts as the Proton donor. 73–75 contributes to the substrate binding site; it reads GAA.

Belongs to the PanD family. Heterooctamer of four alpha and four beta subunits. Pyruvate serves as cofactor. Post-translationally, is synthesized initially as an inactive proenzyme, which is activated by self-cleavage at a specific serine bond to produce a beta-subunit with a hydroxyl group at its C-terminus and an alpha-subunit with a pyruvoyl group at its N-terminus.

The protein localises to the cytoplasm. It carries out the reaction L-aspartate + H(+) = beta-alanine + CO2. It functions in the pathway cofactor biosynthesis; (R)-pantothenate biosynthesis; beta-alanine from L-aspartate: step 1/1. Functionally, catalyzes the pyruvoyl-dependent decarboxylation of aspartate to produce beta-alanine. This chain is Aspartate 1-decarboxylase, found in Pseudarthrobacter chlorophenolicus (strain ATCC 700700 / DSM 12829 / CIP 107037 / JCM 12360 / KCTC 9906 / NCIMB 13794 / A6) (Arthrobacter chlorophenolicus).